The sequence spans 429 residues: Glutamate-1-semialdehyde 2,1-aminomutase (429 aa).

At Lys265 the chain carries N6-(pyridoxal phosphate)lysine.

This sequence belongs to the class-III pyridoxal-phosphate-dependent aminotransferase family. HemL subfamily. As to quaternary structure, homodimer. Pyridoxal 5'-phosphate serves as cofactor.

It localises to the cytoplasm. It carries out the reaction (S)-4-amino-5-oxopentanoate = 5-aminolevulinate. The protein operates within porphyrin-containing compound metabolism; protoporphyrin-IX biosynthesis; 5-aminolevulinate from L-glutamyl-tRNA(Glu): step 2/2. The chain is Glutamate-1-semialdehyde 2,1-aminomutase from Azotobacter vinelandii (strain DJ / ATCC BAA-1303).